Here is a 256-residue protein sequence, read N- to C-terminus: MVALRLIPCLDVAHGRVVKGVNFVNLRDSGDPVELACRYSDEGADELVFLDIRASVENRNTLVDLVSRTAKSVKIPFTVGGGIDSVSSINDLLRAGADKVSLNSSAVRNPDLISKSSREFGNQCIVIAIDARRKVNKFGEWEVYVKGGRENTGIDVLSWAKKVEELGAGEILLTSMDGDGTQNGYDLNLTESVANIVDIPVIASGGAGSLEDIFDVFKEGRASAALLASLLHDKKLTLKEIKTFLLEKKLSIRPYE.

Residues D11 and D130 contribute to the active site.

It belongs to the HisA/HisF family. In terms of assembly, heterodimer of HisH and HisF.

The protein resides in the cytoplasm. It carries out the reaction 5-[(5-phospho-1-deoxy-D-ribulos-1-ylimino)methylamino]-1-(5-phospho-beta-D-ribosyl)imidazole-4-carboxamide + L-glutamine = D-erythro-1-(imidazol-4-yl)glycerol 3-phosphate + 5-amino-1-(5-phospho-beta-D-ribosyl)imidazole-4-carboxamide + L-glutamate + H(+). Its pathway is amino-acid biosynthesis; L-histidine biosynthesis; L-histidine from 5-phospho-alpha-D-ribose 1-diphosphate: step 5/9. IGPS catalyzes the conversion of PRFAR and glutamine to IGP, AICAR and glutamate. The HisF subunit catalyzes the cyclization activity that produces IGP and AICAR from PRFAR using the ammonia provided by the HisH subunit. In Prochlorococcus marinus (strain AS9601), this protein is Imidazole glycerol phosphate synthase subunit HisF.